The following is a 53-amino-acid chain: Large ribosomal subunit protein bL33 (53 aa).

Belongs to the bacterial ribosomal protein bL33 family.

The sequence is that of Large ribosomal subunit protein bL33 from Malacoplasma penetrans (strain HF-2) (Mycoplasma penetrans).